The sequence spans 372 residues: Aminomethyltransferase (372 aa).

The protein belongs to the GcvT family. The glycine cleavage system is composed of four proteins: P, T, L and H.

It catalyses the reaction N(6)-[(R)-S(8)-aminomethyldihydrolipoyl]-L-lysyl-[protein] + (6S)-5,6,7,8-tetrahydrofolate = N(6)-[(R)-dihydrolipoyl]-L-lysyl-[protein] + (6R)-5,10-methylene-5,6,7,8-tetrahydrofolate + NH4(+). Its function is as follows. The glycine cleavage system catalyzes the degradation of glycine. This Paraburkholderia phymatum (strain DSM 17167 / CIP 108236 / LMG 21445 / STM815) (Burkholderia phymatum) protein is Aminomethyltransferase.